The chain runs to 616 residues: MRAWILLLAVLATSQPIVQVASTEDTSISQRFIAAIAPTRTEPSAASAAAAAATATATATATTALAKAFNPFNELLYKSSDSDSDNNNNNYKNRNNNNNNLNKGPRNNKNKGNKHSKSDANRQFNEVHKPRTDQLENSKNKPKQLVNKTNKMAVKDQKHHQPQQQQQQHHKPATTTALTSTESHQSPIETIFVDDPALALEEEVASINVPANAGAIIEEQEPSTYSKKELIKDKLKPDPSTLVEIENSLLSLFNMKRPPKIDRSKIIIPEAMKKLYAEIMGHELDSVNIPRPGLLTKSANTVRSFTHKDSKIDDRFPHHHRFRLHFDVKSIPAEEKLKAAELQLTRDALAQAAVASTSANRTRYQVLVYDITRVGVRGQREPSYLLLDTKTVRLNSTDTVSLDVQPAVDRWLATPQKNYGLLVEVRTMRSLKPAPHHHVRLRRSADEAHEQWQHKQPLLFAYTDDGRHKARSIRDVSGGGGGGGGAGEGGKGNGGGRNRRHQRRPARRKNHEETCRRHSLYVDFADVGWDDWIVAPPGYDAYYCHGKCPFPLADHFNSTNHAVVQTLVNNLNPGKVPKACCVPTQLDSVAMLYLNDQSTVVLKNYQEMTVVGCGCR.

The N-terminal stretch at 1–23 (MRAWILLLAVLATSQPIVQVAST) is a signal peptide. The propeptide occupies 24-474 (EDTSISQRFI…DGRHKARSIR (451 aa)). A disordered region spans residues 80–188 (SDSDSDNNNN…TSTESHQSPI (109 aa)). Low complexity predominate over residues 86 to 105 (NNNNNYKNRNNNNNNLNKGP). The segment covering 106–115 (RNNKNKGNKH) has biased composition (basic residues). Over residues 116-139 (SKSDANRQFNEVHKPRTDQLENSK) the composition is skewed to basic and acidic residues. N-linked (GlcNAc...) asparagine glycosylation is present at N147. Over residues 173 to 188 (ATTTALTSTESHQSPI) the composition is skewed to polar residues. N360 and N395 each carry an N-linked (GlcNAc...) asparagine glycan. The segment at 470 to 512 (ARSIRDVSGGGGGGGGAGEGGKGNGGGRNRRHQRRPARRKNHE) is disordered. The segment covering 477–496 (SGGGGGGGGAGEGGKGNGGG) has biased composition (gly residues). The span at 497–509 (RNRRHQRRPARRK) shows a compositional bias: basic residues. Disulfide bonds link C515/C581, C544/C613, and C548/C615. N557 is a glycosylation site (N-linked (GlcNAc...) asparagine).

It belongs to the TGF-beta family. As to quaternary structure, heterodimers of scw/dpp are the active subunit, dpp/dpp homodimers elicit a basal response and scw/scw homodimers alone are ineffective in specifying a dorsal pattern. In terms of tissue distribution, expressed in the imaginal discs associated with establishment of the proximal-distal axis of the appendages, and midgut mesoderm.

The protein resides in the secreted. In terms of biological role, acts as an extracellular morphogen to establish at least two cellular response thresholds within the dorsal half of the drosophila embryo. Required for the proper development of the embryonic dorsal hypoderm, for viability of larvae and for cell viability of the epithelial cells in the imaginal disks. Acts together with scw. This is Protein decapentaplegic (dpp) from Drosophila pseudoobscura pseudoobscura (Fruit fly).